Reading from the N-terminus, the 342-residue chain is tRNA N6-adenosine threonylcarbamoyltransferase (342 aa).

Fe cation is bound by residues His114 and His118. Residues 136–140, Asp169, Gly182, Asp186, and Asn275 contribute to the substrate site; that span reads LVSGG. Asp301 is a binding site for Fe cation.

It belongs to the KAE1 / TsaD family. Fe(2+) is required as a cofactor.

It localises to the cytoplasm. It carries out the reaction L-threonylcarbamoyladenylate + adenosine(37) in tRNA = N(6)-L-threonylcarbamoyladenosine(37) in tRNA + AMP + H(+). Its function is as follows. Required for the formation of a threonylcarbamoyl group on adenosine at position 37 (t(6)A37) in tRNAs that read codons beginning with adenine. Is involved in the transfer of the threonylcarbamoyl moiety of threonylcarbamoyl-AMP (TC-AMP) to the N6 group of A37, together with TsaE and TsaB. TsaD likely plays a direct catalytic role in this reaction. The sequence is that of tRNA N6-adenosine threonylcarbamoyltransferase from Streptococcus pyogenes serotype M2 (strain MGAS10270).